The chain runs to 196 residues: Peptidyl-tRNA hydrolase (196 aa).

Tyrosine 17 provides a ligand contact to tRNA. The Proton acceptor role is filled by histidine 22. Residues phenylalanine 68, asparagine 70, and asparagine 116 each contribute to the tRNA site.

This sequence belongs to the PTH family. In terms of assembly, monomer.

It localises to the cytoplasm. The catalysed reaction is an N-acyl-L-alpha-aminoacyl-tRNA + H2O = an N-acyl-L-amino acid + a tRNA + H(+). Hydrolyzes ribosome-free peptidyl-tRNAs (with 1 or more amino acids incorporated), which drop off the ribosome during protein synthesis, or as a result of ribosome stalling. In terms of biological role, catalyzes the release of premature peptidyl moieties from peptidyl-tRNA molecules trapped in stalled 50S ribosomal subunits, and thus maintains levels of free tRNAs and 50S ribosomes. The polypeptide is Peptidyl-tRNA hydrolase (Photorhabdus laumondii subsp. laumondii (strain DSM 15139 / CIP 105565 / TT01) (Photorhabdus luminescens subsp. laumondii)).